We begin with the raw amino-acid sequence, 494 residues long: Ubiquitin carboxyl-terminal hydrolase 27 (494 aa).

Residues 30–50 (LSFAGLLGVAGFVFAQQHGLF) form a helical membrane-spanning segment. Positions 74–494 (PGLQNLGNNC…EASLLFYERL (421 aa)) constitute a USP domain. Cysteine 83 serves as the catalytic Nucleophile. The Proton acceptor role is filled by histidine 440.

Belongs to the peptidase C19 family.

The protein localises to the membrane. It catalyses the reaction Thiol-dependent hydrolysis of ester, thioester, amide, peptide and isopeptide bonds formed by the C-terminal Gly of ubiquitin (a 76-residue protein attached to proteins as an intracellular targeting signal).. Recognizes and hydrolyzes the peptide bond at the C-terminal Gly of ubiquitin. Involved in the processing of poly-ubiquitin precursors as well as that of ubiquitinated proteins. The sequence is that of Ubiquitin carboxyl-terminal hydrolase 27 (UBP27) from Arabidopsis thaliana (Mouse-ear cress).